Consider the following 332-residue polypeptide: Ribosomal RNA small subunit methyltransferase C (332 aa).

It belongs to the methyltransferase superfamily. RsmC family. Monomer.

Its subcellular location is the cytoplasm. It carries out the reaction guanosine(1207) in 16S rRNA + S-adenosyl-L-methionine = N(2)-methylguanosine(1207) in 16S rRNA + S-adenosyl-L-homocysteine + H(+). Functionally, specifically methylates the guanine in position 1207 of 16S rRNA in the 30S particle. The protein is Ribosomal RNA small subunit methyltransferase C of Pseudomonas aeruginosa (strain UCBPP-PA14).